We begin with the raw amino-acid sequence, 803 residues long: MYVVNRKGEEEPVSFDQILSRITKLSYGLHPLVDPARVTQAVINGLYSGIKTSELDELASQTCAYMAATHNDFSKLAARISTSNLHKNTSSDIGDVASQLYNFKDNQGCPAPLISKPVYDFIMENRERINSKIDFSKDFEYDYFAFKTLERSYLLKIDNKVVERPQHLLMRVSCGIHCGDIEAALETYELLSQKYFTHATPTLFNSGTPRPQMSSCFLLRIPEDSINGIFDTLTKCANISKTAGGLGVAVSNIRGTGSYIRGTNGRSNGLIPMLRVYNDTARYIDQGGGKRKGAIAIYLEPWHVDVVEFIEIRKNHGKEEMRCRDLFPALWVPDLFMERVEKDQDWTLMCPDECRGLQDVWGDDFKKLYEEYEKQGRGRKTMKAQKLWFLILQAQIETGTPFICYKDAANSKSNQKNLGTIVSSNLCTEIIEYTSTDEVAVCNLASIGLPKFVDKNNKTFDFDKLKEVTKVITRNLNKLIDVGYYSLKECKKSNLRHRPLGIGIQGLADCFMMLRMPYESEGAKKLNKQIFEVIYYAALDASCELAEKYGPYETYSGSPASKGILQFDMWGVTPDSGLCDWDLLKDRISKHGIRNSLLISPMPTASTSQILGNNESFEPFTSNIYHRRVLSGEFFVVNPHLLNDLLELGLWDDRLKQNIIANNGSIQNILTIPEDIRELYKTVWEIKQKTVIDMAADRGPYVCQSQSLNIHMENANFAKLSSMHFYGWKKGLKTGIYYLRTQSATRPIQFTVDQQLLKSETKEKDSLETNKRQALEPEAQKLIACPLRPTNMKDDEECMMCSG.

The ATP-cone domain occupies 1-91; the sequence is MYVVNRKGEE…TSNLHKNTSS (91 aa). ATP is bound by residues 5-6, 11-17, threonine 52, and aspartate 56; these read NR and EPVSFDQ. Serine 215 is a GDP binding site. Residues cysteine 216 and cysteine 442 are joined by a disulfide bond. DTTP is bound by residues 224-226, lysine 241, arginine 254, and 261-262; these read DSI and RG. Asparagine 425 contributes to the GDP binding site. The Proton acceptor role is filled by asparagine 425. Cysteine 427 acts as the Cysteine radical intermediate in catalysis. GDP-binding positions include glutamate 429 and 604 to 607; that span reads TAST. Glutamate 429 acts as the Proton acceptor in catalysis.

The protein belongs to the ribonucleoside diphosphate reductase large chain family. As to quaternary structure, heterodimer of a large and a small subunit.

It carries out the reaction a 2'-deoxyribonucleoside 5'-diphosphate + [thioredoxin]-disulfide + H2O = a ribonucleoside 5'-diphosphate + [thioredoxin]-dithiol. Under complex allosteric control mediated by deoxynucleoside triphosphates and ATP binding to separate specificity and activation sites on the large subunit. The type of nucleotide bound at the specificity site determines substrate preference. It seems probable that ATP makes the enzyme reduce CDP and UDP, dGTP favors ADP reduction and dTTP favors GDP reduction. Stimulated by ATP and inhibited by dATP binding to the activity site. Provides the precursors necessary for DNA synthesis. Catalyzes the biosynthesis of deoxyribonucleotides from the corresponding ribonucleotides. The sequence is that of Ribonucleoside-diphosphate reductase large chain (RNR1) from Cryptosporidium parvum.